The following is a 975-amino-acid chain: P3N-PIPO polyprotein (975 aa).

The Peptidase S30 domain occupies 139 to 284 (LKGQHTIHYV…GRDMSTIREF (146 aa)). Active-site for P1 proteinase activity residues include histidine 192, aspartate 201, and serine 232. An Involved in interaction with stylet and aphid transmission motif is present at residues 335-338 (RITC). Positions 593-595 (PTK) match the Involved in virions binding and aphid transmission motif. The Peptidase C6 domain occupies 619-741 (MYIAKDGFCH…ESELKYYRVG (123 aa)). Catalysis depends on for helper component proteinase activity residues cysteine 627 and histidine 700.

Belongs to the potyviridae P3N-PIPO polyprotein family. In terms of assembly, interacts (via PIPO domain) with host PCaP1 protein; this interaction may help to anchor the movement complex to the plasma membrane from which the complex could move to the plasmodesmata. Post-translationally, potyviral RNA is expressed as two polyproteins which undergo post-translational proteolytic processing. Genome polyprotein is processed by NIa-pro, P1 and HC-pro proteinases resulting in the production of at least ten individual proteins. P3N-PIPO is cleaved by P1 and HC-pro proteinases resulting in the production of three individual proteins. The P1 proteinase and the HC-pro cleave only their respective C-termini autocatalytically.

It localises to the host cell junction. Its subcellular location is the host plasmodesma. The enzyme catalyses Hydrolyzes a Gly-|-Gly bond at its own C-terminus, commonly in the sequence -Tyr-Xaa-Val-Gly-|-Gly, in the processing of the potyviral polyprotein.. Functionally, required for aphid transmission and also has proteolytic activity. Only cleaves a Gly-Gly dipeptide at its own C-terminus. Interacts with virions and aphid stylets. Acts as a suppressor of RNA-mediated gene silencing, also known as post-transcriptional gene silencing (PTGS), a mechanism of plant viral defense that limits the accumulation of viral RNAs. May have RNA-binding activity. Its function is as follows. Allows efficient cell to cell propagation, by bypassing the host cell wall barrier. Transports viral genome to neighboring plant cells directly through plasmosdesmata, without any budding. The protein is P3N-PIPO polyprotein of Arachis hypogaea (Peanut).